A 588-amino-acid chain; its full sequence is Sulfite reductase [NADPH] hemoprotein beta-component (588 aa).

Positions 443, 449, 488, and 492 each coordinate [4Fe-4S] cluster. C492 is a binding site for siroheme.

Belongs to the nitrite and sulfite reductase 4Fe-4S domain family. As to quaternary structure, alpha(8)-beta(8). The alpha component is a flavoprotein, the beta component is a hemoprotein. Requires siroheme as cofactor. The cofactor is [4Fe-4S] cluster.

The catalysed reaction is hydrogen sulfide + 3 NADP(+) + 3 H2O = sulfite + 3 NADPH + 4 H(+). The protein operates within sulfur metabolism; hydrogen sulfide biosynthesis; hydrogen sulfide from sulfite (NADPH route): step 1/1. Component of the sulfite reductase complex that catalyzes the 6-electron reduction of sulfite to sulfide. This is one of several activities required for the biosynthesis of L-cysteine from sulfate. In Actinobacillus succinogenes (strain ATCC 55618 / DSM 22257 / CCUG 43843 / 130Z), this protein is Sulfite reductase [NADPH] hemoprotein beta-component.